The following is a 425-amino-acid chain: tRNA(Ile)-lysidine synthase (425 aa).

27 to 32 is a binding site for ATP; that stretch reads SGGLDS.

This sequence belongs to the tRNA(Ile)-lysidine synthase family.

It is found in the cytoplasm. It catalyses the reaction cytidine(34) in tRNA(Ile2) + L-lysine + ATP = lysidine(34) in tRNA(Ile2) + AMP + diphosphate + H(+). Functionally, ligates lysine onto the cytidine present at position 34 of the AUA codon-specific tRNA(Ile) that contains the anticodon CAU, in an ATP-dependent manner. Cytidine is converted to lysidine, thus changing the amino acid specificity of the tRNA from methionine to isoleucine. The protein is tRNA(Ile)-lysidine synthase of Streptococcus pneumoniae (strain 70585).